The primary structure comprises 75 residues: MKLLLFTALVLVVISLIEVEAENERACIPLEKECTKTPGNCCSGLKCDCYRRFEQGVAKGIQCWCIEKDVTYKGI.

The signal sequence occupies residues 1–21 (MKLLLFTALVLVVISLIEVEA). The propeptide occupies 22–25 (ENER).

Belongs to the neurotoxin 19 (CSTX) family. 06 (U6-Lctx) subfamily. In terms of processing, contains 4 disulfide bonds. In terms of tissue distribution, expressed by the venom gland.

It localises to the secreted. This chain is U6-lycotoxin-Ls1b, found in Lycosa singoriensis (Wolf spider).